The chain runs to 281 residues: Spermatogenesis-associated serine-rich protein 1 (281 aa).

Over residues 1–14 the composition is skewed to basic and acidic residues; the sequence is MEAARDAQHSDVLE. Positions 1 to 92 are disordered; it reads MEAARDAQHS…SSSAQANRSL (92 aa). Residues 21 to 37 show a composition bias toward polar residues; it reads SRTSSHQNRRASLSSDG. The residue at position 53 (threonine 53) is a Phosphothreonine. Residues 54 to 65 show a composition bias toward polar residues; sequence PSDTASGLGQKT. A compositionally biased stretch (low complexity) spans 66-85; the sequence is SSTSSSSSSSSSSSPSSSSS. Serine 71, serine 74, serine 77, serine 78, serine 79, and serine 91 each carry phosphoserine.

Detected in pachytene spermatocytes and round spermatids.

This chain is Spermatogenesis-associated serine-rich protein 1 (Spats1), found in Rattus norvegicus (Rat).